A 565-amino-acid polypeptide reads, in one-letter code: Periplasmic trehalase (565 aa).

The N-terminal stretch at 1–30 is a signal peptide; that stretch reads MKSPTPSRPQKMALIPACIFLCFAALSVQA. Residues Arg-152, 159-160, Asn-196, 205-207, 277-279, and Gly-310 each bind substrate; these read WD, RSQ, and RPE. Residues Asp-312 and Glu-496 each act as proton donor/acceptor in the active site. Glu-511 is a binding site for substrate. The tract at residues 539–565 is disordered; it reads CDNVPATRPLSESTTQPLKQKEAEPTP.

This sequence belongs to the glycosyl hydrolase 37 family. Monomer.

Its subcellular location is the periplasm. It carries out the reaction alpha,alpha-trehalose + H2O = alpha-D-glucose + beta-D-glucose. In terms of biological role, provides the cells with the ability to utilize trehalose at high osmolarity by splitting it into glucose molecules that can subsequently be taken up by the phosphotransferase-mediated uptake system. The chain is Periplasmic trehalase from Escherichia coli (strain SMS-3-5 / SECEC).